Consider the following 125-residue polypeptide: Holo-[acyl-carrier-protein] synthase (125 aa).

Residues Asp-8 and Glu-57 each contribute to the Mg(2+) site.

The protein belongs to the P-Pant transferase superfamily. AcpS family. Mg(2+) is required as a cofactor.

The protein localises to the cytoplasm. It catalyses the reaction apo-[ACP] + CoA = holo-[ACP] + adenosine 3',5'-bisphosphate + H(+). Its function is as follows. Transfers the 4'-phosphopantetheine moiety from coenzyme A to a Ser of acyl-carrier-protein. In Aromatoleum aromaticum (strain DSM 19018 / LMG 30748 / EbN1) (Azoarcus sp. (strain EbN1)), this protein is Holo-[acyl-carrier-protein] synthase.